The sequence spans 254 residues: Mamu class II histocompatibility antigen, DR alpha chain (254 aa).

The N-terminal stretch at 1 to 25 is a signal peptide; sequence MAESGVPVLGFFIIAVLMSAQESWA. The tract at residues 26–109 is alpha-1; it reads IKEEHVIIQA…KRSNNTPITN (84 aa). Residues 26-216 lie on the Extracellular side of the membrane; it reads IKEEHVIIQA…APSPLPETTE (191 aa). N-linked (GlcNAc...) asparagine glycosylation is present at N103. The segment at 110–203 is alpha-2; that stretch reads VPPEVTVLTN…CLDAPLLKHW (94 aa). The region spanning 112–204 is the Ig-like C1-type domain; it reads PEVTVLTNSP…LDAPLLKHWE (93 aa). C132 and C188 are disulfide-bonded. Residues 204–216 form a connecting peptide region; that stretch reads EFDAPSPLPETTE. Residues 217 to 239 traverse the membrane as a helical segment; the sequence is NVVCALGLIVGLVGIIVGTVFII. Over 240 to 254 the chain is Cytoplasmic; it reads KGVRKSNAAERRGPL. K244 participates in a covalent cross-link: Glycyl lysine isopeptide (Lys-Gly) (interchain with G-Cter in ubiquitin).

The protein belongs to the MHC class II family. As to quaternary structure, heterodimer of an alpha chain and a beta chain.

The protein resides in the membrane. The sequence is that of Mamu class II histocompatibility antigen, DR alpha chain (Mamu-DRA) from Macaca mulatta (Rhesus macaque).